We begin with the raw amino-acid sequence, 303 residues long: Short chain dehydrogenase pigC (303 aa).

The NADP(+) site is built by isoleucine 45, aspartate 103, asparagine 130, arginine 164, tyrosine 196, lysine 200, and threonine 231. The active-site Proton donor is tyrosine 196. Lysine 200 acts as the Lowers pKa of active site Tyr in catalysis.

It belongs to the short-chain dehydrogenases/reductases (SDR) family.

The protein operates within secondary metabolite biosynthesis. Its function is as follows. Short chain dehydrogenase; part of the gene cluster that mediates the biosynthesis of azaphilone pigments (MonAzPs), a complex mixture of compounds with a common azaphilone skeleton very widely used as food colorants. Within the pathway, pigC intercepts the very reactive benzaldehyde produced by the nrPKS pigA to reduce the omega-1 carbonyl to the alcohol to provide the first stable enzyme-free MonAzPs intermediate, 6-(4-hydroxy-2-oxopentyl)-3-methyl-2,4-dioxocyclohexane carbaldehyde, also known as M7PKS-1. The first step of the pathway is performed by the nrPKS pigA that forms the hexaketide precursor from successive condensations of five malonyl-CoA units, with a simple acetyl-CoA starter unit. The role of esterase pigG is not clear, but it may play at most a supplementary role in the formation of the benzaldehyde produced by the pigA nrPKS. This very reactive benzaldehyde is intercepted by the pigC ketoreductase that to provide the first stable enzyme-free MonAzPs intermediate, M7PKS-1. The FAD-dependent monooxygenase pigN hydroxylates M7PKS-1 at C-4, which triggers the formation of the pyran ring. PigJ, pigK and pigD are involved in the acetylation of the pyran ring. PigJ and pigK form the two subunits of a dedicated fungal FAS that produces the side chain fatty acyl moiety of MonAzPs and pigD transfers the fatty acyl chain to the C-4 alcohol. PigM and pigO are involved in the elimination of the omega-1 alcohol. PigM acts as an O-acetyltransferase that synthesizes the putative O-11 acetyl intermediate whereas pigO eliminates acetic acid to yield an intermediate with a C10(11) double bond. The dehydration of the C-11 alcohol followed by the reduction of the C6(7) double bond by the NAD(P)H-dependent oxidoreductase pigE increases the electrophilicity of the C-5 ketone of the resulting acyl benzopyran. This in turn sets up the C-5 ketone for an intramolecular Knoevenagel aldol condensation with the C-20 enol of the side chain. This condensation affords the characteristic linear tricyclic carbon skeletons of the yellow pigments that serve as the common precursors for the classical yellow pigments monascin and ankaflavin, orange pigments rubopunctatin and monascorubrin, and red pigments ribropunctamine and monascorubramine. The FAD-dependent oxidoreductase pigF is especially invoved in the biosynthesis of orange and red pigments via desaturation of C6(7). The chain is Short chain dehydrogenase pigC from Monascus ruber (Mold).